Here is a 595-residue protein sequence, read N- to C-terminus: APOBEC1 complementation factor (595 aa).

RRM domains are found at residues 56-134, 136-218, and 231-303; these read CEIF…ASVD, CRLF…WAEP, and KILY…LAKP. The segment at 360 to 409 is required for nuclear localization; it reads HFPATKGHLSNRALIRTPSVREIYMNVPVGAAGVRGLGGRGYLAYTGLGR.

As to quaternary structure, part of the apolipoprotein B mRNA editing complex with APOBEC1. Interacts with TNPO2; TNPO2 may be responsible for transport of A1CF into the nucleus. Interacts with SYNCRIP. Interacts with CELF2/CUGBP2. Interacts with RBM47. Expressed primarily in liver, small intestine and kidney.

Its subcellular location is the nucleus. The protein localises to the endoplasmic reticulum. It localises to the cytoplasm. Essential component of the apolipoprotein B mRNA editing enzyme complex which is responsible for the postranscriptional editing of a CAA codon for Gln to a UAA codon for stop in APOB mRNA. Binds to APOB mRNA and is probably responsible for docking the catalytic subunit, APOBEC1, to the mRNA to allow it to deaminate its target cytosine. The complex also seems to protect the edited APOB mRNA from nonsense-mediated decay. The chain is APOBEC1 complementation factor (A1cf) from Mus musculus (Mouse).